A 157-amino-acid chain; its full sequence is Probable succinate transporter subunit YjjB (157 aa).

A run of 4 helical transmembrane segments spans residues 8 to 28 (LALA…AMVF), 50 to 70 (MILM…SMLG), 87 to 107 (VFTV…TAMI), and 129 to 149 (FLTA…PGLW).

The protein belongs to the ThrE exporter (TC 2.A.79) family. In terms of assembly, the transporter is composed of YjjB and YjjP.

The protein localises to the cell inner membrane. Involved in succinate export with YjjP. Both proteins are required for export. This Escherichia coli O157:H7 (strain EC4115 / EHEC) protein is Probable succinate transporter subunit YjjB.